Reading from the N-terminus, the 549-residue chain is RNA-induced transcriptional silencing complex protein tas3 (549 aa).

Disordered regions lie at residues 89 to 111 (KNSPAKAKATHTSSGVTKEVRAS), 126 to 184 (DGKE…SDSI), 202 to 225 (IRSSDSKSVGWDDNSTGFRESSKS), 298 to 361 (LDNF…HLEK), and 381 to 430 (AHFH…PLAS). Residues 298–307 (LDNFNRPSQQ) show a composition bias toward polar residues. Basic and acidic residues-rich tracts occupy residues 328–361 (YDSYHPDSRSDSYRSKREHYDNRDTGPRSKHLEK) and 403–416 (SDRQRESRENELPT). Residues 419 to 430 (LNASDSHNPLAS) are compositionally biased toward polar residues.

Ago1, chp1 and tas3 interact to form the core of the RNA-induced transcriptional silencing (RITS) complex. The RITS complex interacts with the RDRC complex via interaction between ago1 and hrr1. Clr4 has a role in mediating this interaction.

The protein resides in the nucleus. The protein localises to the cytoplasm. It localises to the cytoskeleton. Its subcellular location is the microtubule organizing center. It is found in the spindle pole body. Has a role in the RNA interference (RNAi) pathway which is important for heterochromatin formation and accurate chromosome segregation. A member of the RNA-induced transcriptional silencing (RITS) complex which is involved in the biosynthesis of dsRNA from primer siRNAs provided by the RNA-directed RNA polymerase (RDRC) complex. The polypeptide is RNA-induced transcriptional silencing complex protein tas3 (tas3) (Schizosaccharomyces pombe (strain 972 / ATCC 24843) (Fission yeast)).